The chain runs to 100 residues: Small ribosomal subunit protein bS20 (100 aa).

This sequence belongs to the bacterial ribosomal protein bS20 family.

Functionally, binds directly to 16S ribosomal RNA. The sequence is that of Small ribosomal subunit protein bS20 from Synechococcus sp. (strain JA-3-3Ab) (Cyanobacteria bacterium Yellowstone A-Prime).